The primary structure comprises 503 residues: Maturase K (503 aa).

It belongs to the intron maturase 2 family. MatK subfamily.

Its subcellular location is the plastid. It localises to the chloroplast. Functionally, usually encoded in the trnK tRNA gene intron. Probably assists in splicing its own and other chloroplast group II introns. In Syzygium anisatum (Aniseed myrtle), this protein is Maturase K.